Consider the following 848-residue polypeptide: Translation initiation factor IF-2 (848 aa).

The interval 106-150 (TEQQTEAENSTNINLSEQTIKNNSHQSSSNTIETTQEKKQNDDLS) is disordered. The segment covering 112-139 (AENSTNINLSEQTIKNNSHQSSSNTIET) has biased composition (polar residues). A tr-type G domain is found at 347–517 (PRAPIITVMG…LLLADMLELK (171 aa)). Positions 356-363 (GHVDHGKT) are G1. 356–363 (GHVDHGKT) is a GTP binding site. Residues 381–385 (GITQH) are G2. The interval 403-406 (DTPG) is G3. GTP is bound by residues 403–407 (DTPGH) and 457–460 (NKID). Residues 457 to 460 (NKID) are G4. The tract at residues 493-495 (SAL) is G5.

Belongs to the TRAFAC class translation factor GTPase superfamily. Classic translation factor GTPase family. IF-2 subfamily.

Its subcellular location is the cytoplasm. One of the essential components for the initiation of protein synthesis. Protects formylmethionyl-tRNA from spontaneous hydrolysis and promotes its binding to the 30S ribosomal subunits. Also involved in the hydrolysis of GTP during the formation of the 70S ribosomal complex. This Orientia tsutsugamushi (strain Boryong) (Rickettsia tsutsugamushi) protein is Translation initiation factor IF-2.